We begin with the raw amino-acid sequence, 354 residues long: Divinyl chlorophyll a/b light-harvesting protein PcbG (354 aa).

Transmembrane regions (helical) follow at residues phenylalanine 27–leucine 47, isoleucine 65–glycine 85, valine 88–serine 108, valine 201–alanine 221, alanine 241–cysteine 261, and leucine 308–isoleucine 328.

Belongs to the PsbB/PsbC family. IsiA/Pcb subfamily. In terms of assembly, the antenna complex consists of divinyl chlorophylls (a and b) and divinyl chlorophyll a/b binding proteins and binds more divinyl chlorophyll b than does the antenna complex from high-light-adapted Prochlorococcus. The cofactor is divinyl chlorophyll a. Requires divinyl chlorophyll b as cofactor.

It is found in the cellular thylakoid membrane. Its function is as follows. The antenna complex functions as a light receptor, it captures and delivers excitation energy to photosystems II and I. The Prochlorales pcb genes are not related to higher plant LHCs. The sequence is that of Divinyl chlorophyll a/b light-harvesting protein PcbG (pcbG) from Prochlorococcus marinus (strain NATL2A).